A 509-amino-acid chain; its full sequence is Kynureninase 1 (509 aa).

Pyridoxal 5'-phosphate is bound by residues L169, T170, 197–200, D283, H286, and Y308; that span reads FPSD. Position 309 is an N6-(pyridoxal phosphate)lysine (K309). Positions 349 and 377 each coordinate pyridoxal 5'-phosphate.

This sequence belongs to the kynureninase family. In terms of assembly, homodimer. Requires pyridoxal 5'-phosphate as cofactor.

The protein localises to the cytoplasm. The enzyme catalyses L-kynurenine + H2O = anthranilate + L-alanine + H(+). It catalyses the reaction 3-hydroxy-L-kynurenine + H2O = 3-hydroxyanthranilate + L-alanine + H(+). The protein operates within amino-acid degradation; L-kynurenine degradation; L-alanine and anthranilate from L-kynurenine: step 1/1. It functions in the pathway cofactor biosynthesis; NAD(+) biosynthesis; quinolinate from L-kynurenine: step 2/3. Functionally, catalyzes the cleavage of L-kynurenine (L-Kyn) and L-3-hydroxykynurenine (L-3OHKyn) into anthranilic acid (AA) and 3-hydroxyanthranilic acid (3-OHAA), respectively. The polypeptide is Kynureninase 1 (bna5-1) (Aspergillus fumigatus (strain CBS 144.89 / FGSC A1163 / CEA10) (Neosartorya fumigata)).